The sequence spans 62 residues: Defensin-like protein A (62 aa).

Positions 1–26 (MRCVVLFMVSCLLIVLLINHFEEVEA) are cleaved as a signal peptide. A disulfide bridge connects residues Cys42 and Cys52.

The protein belongs to the DEFL family.

It localises to the secreted. Its function is as follows. Truncated and inactivated form of SCRA, a protein involved in male-mediated self-incompatibility when active. Most A.thaliana cultivars contain such an inactive form and thus, are self-fertiles. This is Defensin-like protein A (SCRA) from Arabidopsis thaliana (Mouse-ear cress).